A 1062-amino-acid chain; its full sequence is Integrin alpha-8 (1062 aa).

An N-terminal signal peptide occupies residues Met1–Cys35. Residues Leu36–Pro1010 lie on the Extracellular side of the membrane. 7 FG-GAP repeats span residues Asp41–Gln104, Asn121–Glu182, Arg187–Tyr239, Lys252–Met305, Thr306–Gln371, Asp372–Ser430, and Gln434–Met497. A glycan (N-linked (GlcNAc...) asparagine) is linked at Asn80. Cys95 and Cys105 are disulfide-bonded. An N-linked (GlcNAc...) asparagine glycan is attached at Asn121. A disulfide bond links Cys149 and Cys170. N-linked (GlcNAc...) asparagine glycosylation occurs at Asn176. Cysteines 186 and 199 form a disulfide. Residue Asn238 is glycosylated (N-linked (GlcNAc...) asparagine). Glu274, Thr276, Asp278, and Glu282 together coordinate Ca(2+). Residues Asn301 and Asn310 are each glycosylated (N-linked (GlcNAc...) asparagine). 9 residues coordinate Ca(2+): Asp328, Asn330, Asp332, Asp336, Asp394, Asn396, Asp398, Tyr400, and Asp402. A Cell attachment site motif is present at residues Arg454–Asp456. 5 residues coordinate Ca(2+): Asp458, Asp460, Asn462, Tyr464, and Asp466. Asn503 carries an N-linked (GlcNAc...) asparagine glycan. 2 disulfides stabilise this stretch: Cys506-Cys517 and Cys523-Cys579. N-linked (GlcNAc...) asparagine glycans are attached at residues Asn600 and Asn604. Intrachain disulfides connect Cys640–Cys646 and Cys712–Cys725. 6 N-linked (GlcNAc...) asparagine glycosylation sites follow: Asn718, Asn736, Asn752, Asn779, Asn895, and Asn922. Cystine bridges form between Cys866–Cys923 and Cys928–Cys933. N-linked (GlcNAc...) asparagine glycosylation occurs at Asn1004. The chain crosses the membrane as a helical span at residues Leu1011 to Ala1031. Topologically, residues Leu1032–Ala1062 are cytoplasmic.

The protein belongs to the integrin alpha chain family. Heterodimer of an alpha and a beta subunit. The alpha subunit is composed of a heavy and a light chain linked by a disulfide bond. Alpha-8 associates with beta-1. As to expression, in brain, expressed in deep cortex, hippocampal CA1, basolateral amygdala and striatum. In kidney, expressed in glomerular mesengium (at protein level).

It is found in the membrane. The protein localises to the cell membrane. Its function is as follows. Integrin alpha-8/beta-1 functions in the genesis of kidney and probably of other organs by regulating the recruitment of mesenchymal cells into epithelial structures. It recognizes the sequence R-G-D in a wide array of ligands including TNC, FN1, SPP1 TGFB1, TGFB3 and VTN. NPNT is probably its functional ligand in kidney genesis. Neuronal receptor for TNC it mediates cell-cell interactions and regulates neurite outgrowth of sensory and motor neurons. In Mus musculus (Mouse), this protein is Integrin alpha-8 (Itga8).